Reading from the N-terminus, the 380-residue chain is Succinyl-diaminopimelate desuccinylase (380 aa).

H66 provides a ligand contact to Zn(2+). The active site involves D68. D99 contacts Zn(2+). Catalysis depends on E135, which acts as the Proton acceptor. Zn(2+) is bound by residues E136, E164, and H350.

Belongs to the peptidase M20A family. DapE subfamily. Homodimer. It depends on Zn(2+) as a cofactor. Co(2+) is required as a cofactor.

It catalyses the reaction N-succinyl-(2S,6S)-2,6-diaminopimelate + H2O = (2S,6S)-2,6-diaminopimelate + succinate. It functions in the pathway amino-acid biosynthesis; L-lysine biosynthesis via DAP pathway; LL-2,6-diaminopimelate from (S)-tetrahydrodipicolinate (succinylase route): step 3/3. In terms of biological role, catalyzes the hydrolysis of N-succinyl-L,L-diaminopimelic acid (SDAP), forming succinate and LL-2,6-diaminopimelate (DAP), an intermediate involved in the bacterial biosynthesis of lysine and meso-diaminopimelic acid, an essential component of bacterial cell walls. This is Succinyl-diaminopimelate desuccinylase from Magnetococcus marinus (strain ATCC BAA-1437 / JCM 17883 / MC-1).